An 89-amino-acid polypeptide reads, in one-letter code: Small ribosomal subunit protein uS15 (89 aa).

Belongs to the universal ribosomal protein uS15 family. As to quaternary structure, part of the 30S ribosomal subunit. Forms a bridge to the 50S subunit in the 70S ribosome, contacting the 23S rRNA.

Functionally, one of the primary rRNA binding proteins, it binds directly to 16S rRNA where it helps nucleate assembly of the platform of the 30S subunit by binding and bridging several RNA helices of the 16S rRNA. Its function is as follows. Forms an intersubunit bridge (bridge B4) with the 23S rRNA of the 50S subunit in the ribosome. This Bartonella quintana (strain Toulouse) (Rochalimaea quintana) protein is Small ribosomal subunit protein uS15.